The following is a 564-amino-acid chain: 4-hydroxy-7-methoxy-3-oxo-3,4-dihydro-2H-1,4-benzoxazin-2-yl glucoside beta-D-glucosidase 1d, chloroplastic (564 aa).

The transit peptide at 1 to 50 directs the protein to the chloroplast; sequence MALLAAATLNPTTHLSLRSRAGRNSENLWLRSAASSQKSKGRFCNLTVRA. A beta-D-glucoside contacts are provided by residues Gln-92, His-194, and 239–240; that span reads NE. The active-site Proton donor is Glu-240. Cysteines 259 and 265 form a disulfide. A beta-D-glucoside is bound by residues Tyr-383, Glu-456, Trp-504, 511–512, and Phe-520; that span reads EW. The active-site Nucleophile is Glu-456.

The protein belongs to the glycosyl hydrolase 1 family. Homo- and heterohexamers. In terms of tissue distribution, expressed in young seedlings early after germination.

The protein resides in the plastid. It is found in the chloroplast. It carries out the reaction Hydrolysis of terminal, non-reducing beta-D-glucosyl residues with release of beta-D-glucose.. It catalyses the reaction DIMBOA beta-D-glucoside + H2O = DIMBOA + D-glucose. The catalysed reaction is DIBOA beta-D-glucoside + H2O = DIBOA + D-glucose. Functionally, acts in defense of young plant parts against pests via the production of hydroxamic acids from hydroxamic acid glucosides. Enzymatic activity is highly correlated with plant growth. The preferred substrate is DIMBOA-beta-D-glucoside. This chain is 4-hydroxy-7-methoxy-3-oxo-3,4-dihydro-2H-1,4-benzoxazin-2-yl glucoside beta-D-glucosidase 1d, chloroplastic (GLU1D), found in Triticum aestivum (Wheat).